The sequence spans 391 residues: 8-amino-7-oxononanoate synthase 1 (391 aa).

Residue 108 to 109 (GF) participates in pyridoxal 5'-phosphate binding. Residue His133 participates in substrate binding. Pyridoxal 5'-phosphate is bound by residues Ser180, 205-208 (DDAH), and 236-239 (TLSK). Lys239 carries the N6-(pyridoxal phosphate)lysine modification. Thr353 is a substrate binding site.

Belongs to the class-II pyridoxal-phosphate-dependent aminotransferase family. BioF subfamily. In terms of assembly, homodimer. Pyridoxal 5'-phosphate is required as a cofactor.

The catalysed reaction is 6-carboxyhexanoyl-[ACP] + L-alanine + H(+) = (8S)-8-amino-7-oxononanoate + holo-[ACP] + CO2. Its pathway is cofactor biosynthesis; biotin biosynthesis. Its function is as follows. Catalyzes the decarboxylative condensation of pimeloyl-[acyl-carrier protein] and L-alanine to produce 8-amino-7-oxononanoate (AON), [acyl-carrier protein], and carbon dioxide. The protein is 8-amino-7-oxononanoate synthase 1 of Bacillus velezensis (strain DSM 23117 / BGSC 10A6 / LMG 26770 / FZB42) (Bacillus amyloliquefaciens subsp. plantarum).